We begin with the raw amino-acid sequence, 479 residues long: Glutamyl-tRNA reductase (479 aa).

Residues 49–52 (TCNR), S109, 114–116 (EQQ), and Q120 contribute to the substrate site. The active-site Nucleophile is the C50. Position 191–196 (191–196 (GAGSMG)) interacts with NADP(+).

This sequence belongs to the glutamyl-tRNA reductase family. Homodimer.

It catalyses the reaction (S)-4-amino-5-oxopentanoate + tRNA(Glu) + NADP(+) = L-glutamyl-tRNA(Glu) + NADPH + H(+). The protein operates within porphyrin-containing compound metabolism; protoporphyrin-IX biosynthesis; 5-aminolevulinate from L-glutamyl-tRNA(Glu): step 1/2. Functionally, catalyzes the NADPH-dependent reduction of glutamyl-tRNA(Glu) to glutamate 1-semialdehyde (GSA). The sequence is that of Glutamyl-tRNA reductase from Rhodococcus jostii (strain RHA1).